A 105-amino-acid polypeptide reads, in one-letter code: Small ribosomal subunit protein uS10 (105 aa).

It belongs to the universal ribosomal protein uS10 family. As to quaternary structure, part of the 30S ribosomal subunit.

Its function is as follows. Involved in the binding of tRNA to the ribosomes. This chain is Small ribosomal subunit protein uS10, found in Synechocystis sp. (strain ATCC 27184 / PCC 6803 / Kazusa).